Consider the following 217-residue polypeptide: Putative thymidylate synthase (217 aa).

Residue Cys-139 is part of the active site.

It belongs to the thymidylate synthase family. Archaeal-type ThyA subfamily. In terms of assembly, monomer.

It localises to the cytoplasm. It participates in pyrimidine metabolism; dTTP biosynthesis. Functionally, may catalyze the biosynthesis of dTMP using an unknown cosubstrate. The sequence is that of Putative thymidylate synthase from Methanococcoides burtonii (strain DSM 6242 / NBRC 107633 / OCM 468 / ACE-M).